The chain runs to 127 residues: Large ribosomal subunit protein bL17 (127 aa).

Belongs to the bacterial ribosomal protein bL17 family. Part of the 50S ribosomal subunit. Contacts protein L32.

This Pediococcus pentosaceus (strain ATCC 25745 / CCUG 21536 / LMG 10740 / 183-1w) protein is Large ribosomal subunit protein bL17.